The primary structure comprises 754 residues: 5-methyltetrahydropteroyltriglutamate--homocysteine methyltransferase (754 aa).

5-methyltetrahydropteroyltri-L-glutamate is bound by residues 15-18 and lysine 114; that span reads RELK. Residues 430-432 and glutamate 483 each bind L-homocysteine; that span reads IGS. L-methionine is bound by residues 430-432 and glutamate 483; that span reads IGS. 5-methyltetrahydropteroyltri-L-glutamate-binding positions include 514 to 515 and tryptophan 560; that span reads RC. Residue aspartate 598 coordinates L-homocysteine. Aspartate 598 contributes to the L-methionine binding site. Glutamate 604 is a 5-methyltetrahydropteroyltri-L-glutamate binding site. Zn(2+) contacts are provided by histidine 641, cysteine 643, and glutamate 665. The active-site Proton donor is the histidine 694. Cysteine 726 is a binding site for Zn(2+).

This sequence belongs to the vitamin-B12 independent methionine synthase family. Zn(2+) is required as a cofactor.

It carries out the reaction 5-methyltetrahydropteroyltri-L-glutamate + L-homocysteine = tetrahydropteroyltri-L-glutamate + L-methionine. It functions in the pathway amino-acid biosynthesis; L-methionine biosynthesis via de novo pathway; L-methionine from L-homocysteine (MetE route): step 1/1. In terms of biological role, catalyzes the transfer of a methyl group from 5-methyltetrahydrofolate to homocysteine resulting in methionine formation. The polypeptide is 5-methyltetrahydropteroyltriglutamate--homocysteine methyltransferase (Campylobacter jejuni subsp. jejuni serotype O:2 (strain ATCC 700819 / NCTC 11168)).